An 81-amino-acid polypeptide reads, in one-letter code: Cytotoxin (81 aa).

Positions 1-21 (MKTLLLTTVVVTIVCLDLEYT) are cleaved as a signal peptide. Intrachain disulfides connect Cys24–Cys42, Cys35–Cys59, Cys63–Cys74, and Cys75–Cys80.

The protein belongs to the three-finger toxin family. Short-chain subfamily. Type IA cytotoxin sub-subfamily. As to quaternary structure, monomer in solution; Homodimer and oligomer in the presence of negatively charged lipids forming a pore with a size ranging between 20 and 30 Angstroms. As to expression, expressed by the venom gland.

It localises to the secreted. The protein resides in the target cell membrane. In terms of biological role, shows cytolytic activity on many different cells by forming pore in lipid membranes. In vivo, increases heart rate or kills the animal by cardiac arrest. In addition, it binds to heparin with high affinity, interacts with Kv channel-interacting protein 1 (KCNIP1) in a calcium-independent manner, and binds to integrin alpha-V/beta-3 (ITGAV/ITGB3) with moderate affinity. This Naja sputatrix (Malayan spitting cobra) protein is Cytotoxin.